Here is a 256-residue protein sequence, read N- to C-terminus: Thiazole synthase (256 aa).

The active-site Schiff-base intermediate with DXP is Lys102. 1-deoxy-D-xylulose 5-phosphate-binding positions include Gly163, 189–190 (AG), and 211–212 (AT).

This sequence belongs to the ThiG family. As to quaternary structure, homotetramer. Forms heterodimers with either ThiH or ThiS.

It is found in the cytoplasm. The enzyme catalyses [ThiS sulfur-carrier protein]-C-terminal-Gly-aminoethanethioate + 2-iminoacetate + 1-deoxy-D-xylulose 5-phosphate = [ThiS sulfur-carrier protein]-C-terminal Gly-Gly + 2-[(2R,5Z)-2-carboxy-4-methylthiazol-5(2H)-ylidene]ethyl phosphate + 2 H2O + H(+). It participates in cofactor biosynthesis; thiamine diphosphate biosynthesis. Functionally, catalyzes the rearrangement of 1-deoxy-D-xylulose 5-phosphate (DXP) to produce the thiazole phosphate moiety of thiamine. Sulfur is provided by the thiocarboxylate moiety of the carrier protein ThiS. In vitro, sulfur can be provided by H(2)S. In Nocardia farcinica (strain IFM 10152), this protein is Thiazole synthase.